Reading from the N-terminus, the 89-residue chain is Small ribosomal subunit protein uS19 (89 aa).

This sequence belongs to the universal ribosomal protein uS19 family.

Protein S19 forms a complex with S13 that binds strongly to the 16S ribosomal RNA. The sequence is that of Small ribosomal subunit protein uS19 from Xylella fastidiosa (strain 9a5c).